The following is a 228-amino-acid chain: uncharacterized protein (228 aa).

One can recognise an ABC transporter domain in the interval 7–228 (VEVHHLKKSV…LVNGQLQEEA (222 aa)). 43-50 (GESGSGKS) contributes to the ATP binding site.

The protein belongs to the ABC transporter superfamily.

This is an uncharacterized protein from Escherichia coli O157:H7.